A 379-amino-acid polypeptide reads, in one-letter code: Transcription termination factor 1a, mitochondrial (379 aa).

The N-terminal 37 residues, 1–37, are a transit peptide targeting the mitochondrion; the sequence is MASRNIWCVRRNFLFDLRDWMLQYSAEVFLKSISFRP. Interaction with DNA regions lie at residues 151-152, 229-233, 306-313, 337-340, and 366-373; these read RS, QSTKR, SEKKFNDK, SINT, and SQRRYEAK.

Belongs to the mTERF family. In terms of assembly, monomer. Phosphoprotein with mostly four phosphate groups. While the DNA-binding activity is unaffected by the phosphorylation state, only the phosphorylated form of the protein is active for termination activity. Functioning seems to be regulated by phosphorylation. Predominantly expressed in heart and liver, with extremely low levels in other tissues. Expressed strongly in the heart and at lower levels in brain, liver and kidney.

The protein localises to the mitochondrion. Functionally, transcription termination factor. Binds to a 28 bp region within the tRNA(Leu(uur)) gene at a position immediately adjacent to and downstream of the 16S rRNA gene; this region comprises a tridecamer sequence critical for directing accurate termination. Binds DNA along the major grove and promotes DNA bending and partial unwinding. Promotes base flipping. Transcription termination activity appears to be polarized with highest specificity for transcripts initiated on the light strand. This is Transcription termination factor 1a, mitochondrial (Mterf1a) from Mus musculus (Mouse).